A 483-amino-acid chain; its full sequence is Altronate oxidoreductase (483 aa).

Position 18 to 29 (I18 to A29) interacts with NAD(+).

Belongs to the mannitol dehydrogenase family. UxaB subfamily.

It carries out the reaction D-altronate + NAD(+) = keto-D-tagaturonate + NADH + H(+). It functions in the pathway carbohydrate metabolism; pentose and glucuronate interconversion. The chain is Altronate oxidoreductase from Shigella flexneri serotype 5b (strain 8401).